We begin with the raw amino-acid sequence, 131 residues long: Large ribosomal subunit protein bL17 (131 aa).

It belongs to the bacterial ribosomal protein bL17 family. As to quaternary structure, part of the 50S ribosomal subunit. Contacts protein L32.

The polypeptide is Large ribosomal subunit protein bL17 (Chromobacterium violaceum (strain ATCC 12472 / DSM 30191 / JCM 1249 / CCUG 213 / NBRC 12614 / NCIMB 9131 / NCTC 9757 / MK)).